The chain runs to 430 residues: Asparagine--tRNA ligase (430 aa).

The protein belongs to the class-II aminoacyl-tRNA synthetase family. In terms of assembly, homodimer.

The protein resides in the cytoplasm. The enzyme catalyses tRNA(Asn) + L-asparagine + ATP = L-asparaginyl-tRNA(Asn) + AMP + diphosphate + H(+). The polypeptide is Asparagine--tRNA ligase (Shouchella clausii (strain KSM-K16) (Alkalihalobacillus clausii)).